Reading from the N-terminus, the 307-residue chain is Pantothenate kinase (307 aa).

Glycine 90–serine 97 contributes to the ATP binding site.

The protein belongs to the prokaryotic pantothenate kinase family.

It localises to the cytoplasm. It carries out the reaction (R)-pantothenate + ATP = (R)-4'-phosphopantothenate + ADP + H(+). The protein operates within cofactor biosynthesis; coenzyme A biosynthesis; CoA from (R)-pantothenate: step 1/5. The polypeptide is Pantothenate kinase (Levilactobacillus brevis (strain ATCC 367 / BCRC 12310 / CIP 105137 / JCM 1170 / LMG 11437 / NCIMB 947 / NCTC 947) (Lactobacillus brevis)).